The sequence spans 234 residues: uncharacterized protein (234 aa).

This is an uncharacterized protein from Acheta domesticus (House cricket).